A 238-amino-acid polypeptide reads, in one-letter code: Citrate-binding protein (238 aa).

The signal sequence occupies residues 1–31; that stretch reads MKMKRSPYCFCCSFALLLLVSFLKDRHFCSA. A propeptide spans 225–238 (removed in mature form); the sequence is LEGCNNNHGTWLVQ.

Its subcellular location is the vacuole. In terms of biological role, may be a subunit of a vacuolar malate and citrate transporter. This Hevea brasiliensis (Para rubber tree) protein is Citrate-binding protein (CBP).